Consider the following 320-residue polypeptide: BTB and MATH domain-containing protein 36 (320 aa).

In terms of domain architecture, MATH spans 7 to 136 (KGSIRFEIQN…DKHAVLEVQI (130 aa)). One can recognise a BTB domain in the interval 160–227 (TDVVLVLEGK…IYPTHMLINS (68 aa)).

The polypeptide is BTB and MATH domain-containing protein 36 (bath-36) (Caenorhabditis elegans).